Here is a 338-residue protein sequence, read N- to C-terminus: Activator of 90 kDa heat shock protein ATPase homolog 1 (338 aa).

Lysine 3 carries the N6-acetyllysine modification. Lysine 182 is covalently cross-linked (Glycyl lysine isopeptide (Lys-Gly) (interchain with G-Cter in SUMO1)). Serine 193 bears the Phosphoserine mark. Lysine 203 participates in a covalent cross-link: Glycyl lysine isopeptide (Lys-Gly) (interchain with G-Cter in SUMO2). Lysine 212 carries the N6-acetyllysine modification. Position 223 is a phosphotyrosine; by ABL (tyrosine 223). Serine 258 is subject to Phosphoserine.

Belongs to the AHA1 family. In terms of assembly, interacts with HSPCA/HSP90. Interacts (phosphorylated on Tyr-223) with HSP90AA1; the interaction activates HSP90AA1 ATPase activity. Interacts with HSP90AB1. Interacts with GCH1. Interacts with SRPK1. Interacts with FLCN. As to quaternary structure, (Microbial infection) Interacts with vesicular stomatitis virus glycoprotein (VSV G) (via cytoplasmic tail). In terms of processing, phosphorylation at Tyr-223 enhances binding to chaperone HSP90AA1. Expressed in numerous tissues, including brain, heart, skeletal muscle and kidney and, at lower levels, liver and placenta.

The protein localises to the cytoplasm. The protein resides in the cytosol. Its subcellular location is the endoplasmic reticulum. Acts as a co-chaperone of HSP90AA1. Activates the ATPase activity of HSP90AA1 leading to increase in its chaperone activity. Competes with the inhibitory co-chaperone FNIP1 for binding to HSP90AA1, thereby providing a reciprocal regulatory mechanism for chaperoning of client proteins. Competes with the inhibitory co-chaperone TSC1 for binding to HSP90AA1, thereby providing a reciprocal regulatory mechanism for chaperoning of client proteins. The chain is Activator of 90 kDa heat shock protein ATPase homolog 1 (AHSA1) from Homo sapiens (Human).